The following is a 640-amino-acid chain: MAPLDLTRGQTDACSTENKDILCRNVLIYGHCRYEDQGCTYNHDQNKNSSQPEAPSKKMFNVDSPSFTPSGQSTVLPKKTTLSSQAASAAPFTPRGGGTPTLQTTAESTMFNPAAIREFTPQNYDLGNNNANGISQENGLYPDPFTMSTMGTALPTAGQYNLPLYGDHSGLAAPGAPFYPPHAAYPTGPIQPPHYHLYQPFGPYRQELQPWQRATYDFFMPQNLREDLQKKQFATLQVIPNSGLPQLEHWHSLVPLDTSNRKNTSCFGYPSWVYKAQNSRNGRHYALRRLEGYRLTNEKAILNVMKDWKKIKNASIVTIHEVFTTREFGDSSLIFAYDFHPLSKTLQEHHFQPIHGNRYRPPPAVPENTIWGYICQIANALKTIHSNRLAARCLEPSKIILTDINRIRLSACAILDVVQFGMNSRSVVELQQEDFVKFGKLILSLATGTLPAHLNNIPAALETLGNKYSANLKSAVNWLLDTSSGETKTIEHFMTGIASQMTTFFDLALQDNDEKLFHLAREVENGRIARSLMKLLTILERGDYDGVPSWSETGDRYQLKLFRDYVFHRVDADGKPNLSIGHMLTCMSKLEAGVDENILLTSRDNETVFVLSYRELRQMYDRAFNELVKASKTGAPGANT.

A C3H1-type zinc finger spans residues 17-46 (ENKDILCRNVLIYGHCRYEDQGCTYNHDQN). 2 stretches are compositionally biased toward polar residues: residues 43-53 (HDQNKNSSQPE) and 63-87 (DSPSFTPSGQSTVLPKKTTLSSQAA). The segment at 43 to 101 (HDQNKNSSQPEAPSKKMFNVDSPSFTPSGQSTVLPKKTTLSSQAASAAPFTPRGGGTPT) is disordered. Residues 237 to 498 (QVIPNSGLPQ…TIEHFMTGIA (262 aa)) form a pseudokinase domain region. ATP-binding positions include Asn-263, Arg-288, 338–345 (DFHPLSKT), and 397–398 (SK). Positions 499 to 537 (SQMTTFFDLALQDNDEKLFHLAREVENGRIARSLMKLLT) form a coiled coil. The tract at residues 538–640 (ILERGDYDGV…SKTGAPGANT (103 aa)) is knob domain.

The protein belongs to the protein kinase superfamily. PAN3 family. In terms of assembly, homodimer. Forms a heterotrimer with a catalytic subunit PAN2 to form the poly(A)-nuclease (PAN) deadenylation complex. Interacts (via PAM-2 motif) with poly(A)-binding protein PAB1 (via PABC domain), conferring substrate specificity of the enzyme complex.

Its subcellular location is the cytoplasm. Its function is as follows. Regulatory subunit of the poly(A)-nuclease (PAN) deadenylation complex, one of two cytoplasmic mRNA deadenylases involved in mRNA turnover. PAN specifically shortens poly(A) tails of RNA and the activity is stimulated by poly(A)-binding protein PAB1. PAN deadenylation is followed by rapid degradation of the shortened mRNA tails by the CCR4-NOT complex. Deadenylated mRNAs are then degraded by two alternative mechanisms, namely exosome-mediated 3'-5' exonucleolytic degradation, or deadenylation-dependent mRNA decaping and subsequent 5'-3' exonucleolytic degradation by XRN1. May also be involved in post-transcriptional maturation of mRNA poly(A) tails. PAN3 acts as a positive regulator for PAN activity, recruiting the catalytic subunit PAN2 to mRNA via its interaction with RNA and with PAB1. In Chaetomium thermophilum (strain DSM 1495 / CBS 144.50 / IMI 039719) (Thermochaetoides thermophila), this protein is PAN2-PAN3 deadenylation complex subunit PAN3.